The sequence spans 279 residues: MATH domain and coiled-coil domain-containing protein At1g31390 (279 aa).

Residues 6–134 (EKKITWTIKN…NGDVKIVVEV (129 aa)) enclose the MATH domain. Positions 235 to 271 (KLDWLEKKLKEVCEARVQEIDEEWKDLTDLKENWSSD) form a coiled coil.

This is MATH domain and coiled-coil domain-containing protein At1g31390 from Arabidopsis thaliana (Mouse-ear cress).